The primary structure comprises 118 residues: Large ribosomal subunit protein bL20 (118 aa).

The protein belongs to the bacterial ribosomal protein bL20 family.

In terms of biological role, binds directly to 23S ribosomal RNA and is necessary for the in vitro assembly process of the 50S ribosomal subunit. It is not involved in the protein synthesizing functions of that subunit. This chain is Large ribosomal subunit protein bL20, found in Nostoc punctiforme (strain ATCC 29133 / PCC 73102).